The sequence spans 184 residues: Adenine phosphoribosyltransferase (184 aa).

This sequence belongs to the purine/pyrimidine phosphoribosyltransferase family. As to quaternary structure, homodimer.

It localises to the cytoplasm. It carries out the reaction AMP + diphosphate = 5-phospho-alpha-D-ribose 1-diphosphate + adenine. It functions in the pathway purine metabolism; AMP biosynthesis via salvage pathway; AMP from adenine: step 1/1. Functionally, catalyzes a salvage reaction resulting in the formation of AMP, that is energically less costly than de novo synthesis. This is Adenine phosphoribosyltransferase from Shewanella putrefaciens (strain CN-32 / ATCC BAA-453).